A 504-amino-acid polypeptide reads, in one-letter code: Cytochrome P450 4A24 (504 aa).

2 helical membrane-spanning segments follow: residues 6–26 (LASASGLLQVASLLGLLLLLL) and 112–132 (VVYRLLIPWIGCGLLLLNGQT). Residue Cys451 coordinates heme.

It belongs to the cytochrome P450 family. Heme is required as a cofactor.

The protein localises to the endoplasmic reticulum membrane. The enzyme catalyses an omega-methyl-long-chain fatty acid + reduced [NADPH--hemoprotein reductase] + O2 = an omega-hydroxy-long-chain fatty acid + oxidized [NADPH--hemoprotein reductase] + H2O + H(+). Its function is as follows. Catalyzes the omega- and (omega-1)-hydroxylation of various fatty acids such as laurate and palmitate. Has no activity toward taurochenodeoxycholic acid. The protein is Cytochrome P450 4A24 (CYP4A24) of Sus scrofa (Pig).